The chain runs to 266 residues: Integral membrane protein 2B (266 aa).

Residues 1-54 are Cytoplasmic-facing; it reads MVKVTFNSALAQKEAKKDEPKSGEEALIIPPDAVAVDCKDPDDVVPVGQRRAWC. Residues 55-75 form a helical; Signal-anchor for type II membrane protein membrane-spanning segment; that stretch reads WCMCFGLAFMLAGVILGGAYL. Topologically, residues 76–266 are lumenal; that stretch reads YKYFALQPDD…KFAVETLICS (191 aa). Residues 102–134 are necessary for interaction with APP and inhibitor effects on APP processing; sequence EPSADAPAALYQTIEENIKIFEEEEVEFISVPV. The BRICHOS domain occupies 137-231; the sequence is FADSDPANIV…LCHDKETYKL (95 aa). 2 cysteine pairs are disulfide-bonded: Cys-164/Cys-223 and Cys-248/Cys-265. The N-linked (GlcNAc...) asparagine glycan is linked to Asn-170.

This sequence belongs to the ITM2 family. Homodimer; disulfide-linked. Interacts with SPPL2A and SPPL2B. Interacts with APP. Mature BRI2 (mBRI2) interacts with the APP amyloid-beta A4 protein; the interaction occurs at the cell surface and in the endocytic compartments and enable alpha- and beta-secretase-induced APP cleavage inhibition. Mature BRI2 (mBRI2) interacts with the APP C99; the interaction occurs in the endocytic compartments and enable gamma-secretase-induced C99 cleavage inhibition. May form heterodimers with Bri23 peptide and APP amyloid-beta protein 40. Interacts with ADAM7 in sperm; the interaction increases following capacitation. In terms of processing, the ectodomain C-terminal part of the imBRI2 is processed by furin producing a secreted Bri23 peptide and a mature BRI2, membrane form (mBRI2). The remaining part of the ectodomain of mBRI2 containing the BRICHOS domain is cleaved by ADAM10 and is secreted (BRI2C, soluble form). The membrane-bound N-terminal fragment (BRI2C, membrane form) is further proteolytically processed by SPPL2A and SPPL2B through regulated intramembrane proteolysis producing a secreted C-peptide and a BRI2 intracellular domain (BRI2 ICD) released in the cytosol. Shedding by ADAM10 facilitates intramembrane cleavage but is not absolutely required for BRI2 ICD generation. Post-translationally, glycosylation at Asn-170 is important for cell surface localization, but doesn't affect furin- and ADAM10-induced proteolytic processing. As to expression, ubiquitous. Expressed in brain.

It localises to the golgi apparatus membrane. The protein resides in the cell membrane. The protein localises to the endosome membrane. It is found in the secreted. Its function is as follows. Plays a regulatory role in the processing of the amyloid-beta A4 precursor protein (APP) and acts as an inhibitor of the amyloid-beta peptide aggregation and fibrils deposition. Plays a role in the induction of neurite outgrowth. Functions as a protease inhibitor by blocking access of secretases to APP cleavage sites. In terms of biological role, mature BRI2 (mBRI2) functions as a modulator of the amyloid-beta A4 precursor protein (APP) processing leading to a strong reduction in the secretion of secretase-processed amyloid-beta protein 40 and amyloid-beta protein 42. Functionally, bri23 peptide prevents aggregation of APP amyloid-beta protein 42 into toxic oligomers. The chain is Integral membrane protein 2B (ITM2B) from Homo sapiens (Human).